We begin with the raw amino-acid sequence, 310 residues long: MDKIFVDEAVSELHTIQDMLRWAVSRFSAANIWYGHGTDNPWDEAVQLVLPSLYLPLDIPEDMRTARLTSSEKHRIVERVIRRINERIPVAYLTNKAWFCGHEFYVDERVLVPRSPIGELINNHFAGLISQQPKYILDMCTGSGCIAIACAYAFPDAEVDAVDISPDALAVAEHNIEEHGLIHHVTPIRSDLFRDLPKVQYDLIVTNPPYVDAEDMSDLPNEYRHEPELGLASGTDGLKLTRRILGNAPDYLSDDGVLICEVGNSMVHLMEQYPDVPFTWLEFDNGGDGVFMLTKAQLLAAREHFNIYKD.

The protein belongs to the protein N5-glutamine methyltransferase family. PrmB subfamily.

The enzyme catalyses L-glutaminyl-[ribosomal protein uL3] + S-adenosyl-L-methionine = N(5)-methyl-L-glutaminyl-[ribosomal protein uL3] + S-adenosyl-L-homocysteine + H(+). Functionally, specifically methylates large ribosomal subunit protein uL3 on 'Gln-150'. The chain is Ribosomal protein uL3 glutamine methyltransferase from Salmonella typhi.